The following is an 84-amino-acid chain: DNA-directed RNA polymerase subunit Rpo5 (84 aa).

It belongs to the archaeal Rpo5/eukaryotic RPB5 RNA polymerase subunit family. As to quaternary structure, part of the RNA polymerase complex.

It is found in the cytoplasm. The catalysed reaction is RNA(n) + a ribonucleoside 5'-triphosphate = RNA(n+1) + diphosphate. Its function is as follows. DNA-dependent RNA polymerase (RNAP) catalyzes the transcription of DNA into RNA using the four ribonucleoside triphosphates as substrates. The sequence is that of DNA-directed RNA polymerase subunit Rpo5 from Saccharolobus islandicus (strain Y.N.15.51 / Yellowstone #2) (Sulfolobus islandicus).